A 184-amino-acid polypeptide reads, in one-letter code: MLKLRALAEAKAKAKEGQGQETTPQVIKPSLIRLKKDLENIDLSEQICEYTTYLDENPMRVNLAIKPDIGYYAGGTYYFNVFIKDTYPMEPPVVKCMHRIYHPNIDIDGNVCLNLLREDWTPALDIQSIIIGILFLFHEPNGRDPLNKDAAKTLIEDPLRFENKVNHSLRGNNIDGVWYDKIIY.

Residues 29-174 enclose the UBC core domain; sequence PSLIRLKKDL…VNHSLRGNNI (146 aa). Cys112 (glycyl thioester intermediate) is an active-site residue.

Belongs to the ubiquitin-conjugating enzyme family. UBC12 subfamily.

It catalyses the reaction [E1 NEDD8-activating enzyme]-S-[NEDD8 protein]-yl-L-cysteine + [E2 NEDD8-conjugating enzyme]-L-cysteine = [E1 NEDD8-activating enzyme]-L-cysteine + [E2 NEDD8-conjugating enzyme]-S-[NEDD8-protein]-yl-L-cysteine.. Its pathway is protein modification; protein neddylation. Functionally, accepts the ubiquitin-like protein NEDD8/RUB1 from the UBA3-ULA1 E1 complex and catalyzes its covalent attachment to other proteins. The polypeptide is NEDD8-conjugating enzyme UBC12 (UBC12) (Kluyveromyces lactis (strain ATCC 8585 / CBS 2359 / DSM 70799 / NBRC 1267 / NRRL Y-1140 / WM37) (Yeast)).